Here is a 312-residue protein sequence, read N- to C-terminus: Malate dehydrogenase (312 aa).

NAD(+) is bound by residues 12 to 17 and D36; that span reads GAGFTG. The substrate site is built by R87 and R93. Residues N100 and 123–125 each bind NAD(+); that span reads LTN. Substrate is bound at residue N125. S149 is subject to Phosphoserine. R156 provides a ligand contact to substrate. The active-site Proton acceptor is the H180.

The protein belongs to the LDH/MDH superfamily. MDH type 3 family. Homotetramer.

It carries out the reaction (S)-malate + NAD(+) = oxaloacetate + NADH + H(+). Functionally, catalyzes the reversible oxidation of malate to oxaloacetate. The polypeptide is Malate dehydrogenase (Bacillus israeli).